A 74-amino-acid polypeptide reads, in one-letter code: Small ribosomal subunit protein eS28 (74 aa).

The protein belongs to the eukaryotic ribosomal protein eS28 family.

The protein is Small ribosomal subunit protein eS28 of Halorubrum lacusprofundi (strain ATCC 49239 / DSM 5036 / JCM 8891 / ACAM 34).